The chain runs to 354 residues: Protein RecA (354 aa).

Gly-67–Thr-74 provides a ligand contact to ATP.

Belongs to the RecA family.

Its subcellular location is the cytoplasm. Can catalyze the hydrolysis of ATP in the presence of single-stranded DNA, the ATP-dependent uptake of single-stranded DNA by duplex DNA, and the ATP-dependent hybridization of homologous single-stranded DNAs. It interacts with LexA causing its activation and leading to its autocatalytic cleavage. This is Protein RecA from Hamiltonella defensa subsp. Acyrthosiphon pisum (strain 5AT).